The following is a 604-amino-acid chain: MRVSGQSIIAISLFTLSLYIHRVQARPFVLVLSNEDLNGGFNDNGAYESSDFDEFGESEPKSEEELDPGSWRRIFETNESTVHASASPQYYSGLHKILSAASEGNTTLMEEAVSEIDSSASSGDPHAQSVMGFVYGIGMMRETSRSKSILHHHFAAAGGNMQSKMALAFRYLRQNMYDKAVELYAELAETAVNSFLISKDSPMAEPVRIHIGTEENKDALRKSRGEEDEDFQILEYQAEKGNSVAMHKIGLFYYFGLRGLRRDHAKALYWFSKAEFNGLGYLYVKGYGVDKRNYTKAREYFEMAANNEDPSGHYNLGVLYLKGTGVKKDVRHATKYFFVAANAGQPKAFYQLAKMFHTGVGLTKNLEMATTFYKLVAERGPWSSLSRWALEAYLKGDVGKAFILYSRMSELGYEVAQSNAAWIVDKYGERSMCMGVYGFCTDKERHDRAHSLWWRASEQGNEHAALLIGDAYYYGRGTERDFVRAAEAYMYAKSQSNAQAMFNLGYMHEHGEGLPFDLHLAKRYYDQALQSDTAAKLPVTLALASVWVRRNYADTALVQVLNSLPEVHQKVVEWVENGMLEEVVLDPVGANVAQPLAAPVAFPQ.

An N-terminal signal peptide occupies residues 1–25; it reads MRVSGQSIIAISLFTLSLYIHRVQA. Positions 48 to 69 are disordered; the sequence is ESSDFDEFGESEPKSEEELDPG. 2 N-linked (GlcNAc...) asparagine glycosylation sites follow: asparagine 78 and asparagine 105. 7 Sel1-like repeats span residues 125-160, 244-274, 279-307, 311-344, 346-380, 464-492, and 498-528; these read PHAQ…AGGN, VAMH…FSKA, LGYL…AANN, SGHY…ANAG, PKAF…AERG, AALL…YMYA, and AQAM…YDQA. Asparagine 293 carries an N-linked (GlcNAc...) asparagine glycan.

Belongs to the sel-1 family.

Functionally, may be involved in the endoplasmic reticulum (ER) quality control system called ER-associated degradation (ERAD). In Arabidopsis thaliana (Mouse-ear cress), this protein is ERAD-associated E3 ubiquitin-protein ligase component HRD3B.